The sequence spans 83 residues: uncharacterized protein (83 aa).

This is an uncharacterized protein from Vaccinia virus (strain Copenhagen) (VACV).